The primary structure comprises 341 residues: Tryptophan--tRNA ligase (341 aa).

Residues R11–T13 and G19–H20 contribute to the ATP site. The 'HIGH' region motif lies at P12–H20. D140 serves as a coordination point for L-tryptophan. ATP-binding positions include G152–D154, L194, and K202–S206. The short motif at K202–S206 is the 'KMSKS' region element.

It belongs to the class-I aminoacyl-tRNA synthetase family. As to quaternary structure, homodimer.

Its subcellular location is the cytoplasm. It catalyses the reaction tRNA(Trp) + L-tryptophan + ATP = L-tryptophyl-tRNA(Trp) + AMP + diphosphate + H(+). Catalyzes the attachment of tryptophan to tRNA(Trp). The chain is Tryptophan--tRNA ligase from Streptococcus pneumoniae serotype 4 (strain ATCC BAA-334 / TIGR4).